The following is a 107-amino-acid chain: Ferredoxin-1 (107 aa).

2 consecutive 4Fe-4S ferredoxin-type domains span residues 2–30 (AFVV…YEGP) and 31–60 (NFLV…SEDE). [3Fe-4S] cluster-binding residues include C9 and C17. [4Fe-4S] cluster contacts are provided by C21, C40, C43, and C46. Residue C50 participates in [3Fe-4S] cluster binding. Residues 84 to 107 (EKKDPLPDAEDWDGVKGKLQHLER) are disordered. Over residues 96–107 (DGVKGKLQHLER) the composition is skewed to basic and acidic residues.

[4Fe-4S] cluster serves as cofactor. [3Fe-4S] cluster is required as a cofactor.

In terms of biological role, ferredoxins are iron-sulfur proteins that transfer electrons in a wide variety of metabolic reactions. This ferredoxin could play a role in regulating gene expression by interacting directly with DNA. This is Ferredoxin-1 (fdxA) from Azotobacter vinelandii.